A 465-amino-acid polypeptide reads, in one-letter code: MDKSSKFFFEDQKYNKERIVRVLGGNLALLKSKGILYEDSSGDLIFNYVGVISNGRNVIFILPKYCNRHLDEHSKRTLFNKLLKIFKKYSGLNKSRESDYFVSELDSDEVSDFMIADYLLNDFSLNGYYQKKFTEYEIDGEGIIDWSKTVNEITPVFSKGVPYYFSTYNEVVQKDEYHLIVKIHKWALSKYFNDFGVILGFTGLEFDKSCDGMKILDYADFFGSVINKEIVNTYVDRDVKLLKALKTAIDREENQFSKRPTLSLYGTKYFHRVWEEVCKTVFSHVNEYVKKISRPNWINFTDIEVNKEKKTLEPDIIKAFEYRSKEYFLILDAKYYNINFDGKKLEGNPGVEDITKQLLYDKALEKLSRGKTKHNAFLFPSSNSTNTFKVFGSVDFDFLDIAAVTLVYISAEQVYNLYLENKTFSTDDLFKFVSEINKSKKRHSVITSTLYGNMFLFTKRLSDKN.

BsuMI restriction activity requires YdiR, YdiS and YdjA.

It catalyses the reaction Endonucleolytic cleavage of DNA to give specific double-stranded fragments with terminal 5'-phosphates.. Functionally, a P subtype restriction enzyme that recognizes the double-stranded sequence 5'-CTCGAG-3'; the cleavage site is unknown. The polypeptide is Type II restriction enzyme BsuMI component YdjA (ydjA) (Bacillus subtilis (strain 168)).